The following is a 471-amino-acid chain: Phosphatidylserine synthase 1 (471 aa).

Ala-2 bears the N-acetylalanine mark. The Cytoplasmic segment spans residues 2–35 (ASCVGSRTLSKDDVNYRMHFRMINEQQVEDITID). A helical membrane pass occupies residues 36–56 (FFYRPHTITLLSFTIVSLMYF). Topologically, residues 57 to 72 (AFTRDDSVPEDNIWRG) are lumenal. Residues 73-93 (ILSVIFFFLIISVLAFPNGPF) form a helical membrane-spanning segment. At 94 to 102 (TRPHPALWR) the chain is on the cytoplasmic side. A helical transmembrane segment spans residues 103–123 (MVFGLSVLYFLFLVFLLFLNF). Topologically, residues 124–160 (EQVKSLMYWLDPNLRYATREADIMEYAVNCHVITWER) are lumenal. The chain crosses the membrane as a helical span at residues 161–181 (IVSHFDIFAFGHFWGWAMKAL). At 182 to 186 (LIRSY) the chain is on the cytoplasmic side. Residues 187 to 207 (GLCWTISITWELTELFFMHLL) traverse the membrane as a helical segment. Over 208–216 (PNFAECWWD) the chain is Lumenal. A helical membrane pass occupies residues 217–237 (QVILDILLCNGGGIWLGMVVC). Residues 238–286 (RFLEMRTYHWASFKDIHTTTGKIKRAVLQFTPASWTYVRWFDPKSSFQR) are Cytoplasmic-facing. A helical transmembrane segment spans residues 287 to 307 (VAGVYLFMIIWQLTELNTFFL). Topologically, residues 308 to 309 (KH) are lumenal. Residues 310–330 (IFVFQASHPLSWCRILFIGCI) form a helical membrane-spanning segment. The Cytoplasmic segment spans residues 331 to 355 (TAPTVRQYYAYLTDTQCKRVGTQCW). Residues 356–376 (VFGVIGFLEAIVCIKFGQDLF) traverse the membrane as a helical segment. Over 377–380 (SKTQ) the chain is Lumenal. The chain crosses the membrane as a helical span at residues 381–401 (ILYVVFWLLCVAFTTFLCLYG). The Cytoplasmic segment spans residues 402–471 (MVWYAEHYGH…SKVTNGVGKK (70 aa)). 3 positions are modified to phosphoserine: Ser-417, Ser-440, and Ser-452. The tract at residues 426–471 (ISWHHGKGSKGSEDSPPKHSSNNESHSSRRRNRHSKSKVTNGVGKK) is disordered. The segment covering 453-462 (SRRRNRHSKS) has biased composition (basic residues).

This sequence belongs to the phosphatidyl serine synthase family.

The protein resides in the endoplasmic reticulum membrane. It carries out the reaction a 1,2-diacyl-sn-glycero-3-phosphoethanolamine + L-serine = a 1,2-diacyl-sn-glycero-3-phospho-L-serine + ethanolamine. The catalysed reaction is a 1,2-diacyl-sn-glycero-3-phosphocholine + L-serine = a 1,2-diacyl-sn-glycero-3-phospho-L-serine + choline. It functions in the pathway phospholipid metabolism; phosphatidylserine biosynthesis. Inhibited by exogenous phosphatidylserine. Its function is as follows. Catalyzes a base-exchange reaction in which the polar head group of phosphatidylethanolamine (PE) or phosphatidylcholine (PC) is replaced by L-serine. Catalyzes mainly the conversion of phosphatidylcholine. Also converts, in vitro and to a lesser extent, phosphatidylethanolamine. The sequence is that of Phosphatidylserine synthase 1 (PTDSS1) from Cricetulus griseus (Chinese hamster).